Here is a 208-residue protein sequence, read N- to C-terminus: Uracil phosphoribosyltransferase (208 aa).

5-phospho-alpha-D-ribose 1-diphosphate-binding positions include Arg-78, Arg-103, and 130–138; that span reads DPMLATGGS. Uracil-binding positions include Ile-193 and 198–200; that span reads GDA. Asp-199 is a 5-phospho-alpha-D-ribose 1-diphosphate binding site.

This sequence belongs to the UPRTase family. It depends on Mg(2+) as a cofactor.

It catalyses the reaction UMP + diphosphate = 5-phospho-alpha-D-ribose 1-diphosphate + uracil. The protein operates within pyrimidine metabolism; UMP biosynthesis via salvage pathway; UMP from uracil: step 1/1. Allosterically activated by GTP. Catalyzes the conversion of uracil and 5-phospho-alpha-D-ribose 1-diphosphate (PRPP) to UMP and diphosphate. The protein is Uracil phosphoribosyltransferase of Sodalis glossinidius (strain morsitans).